We begin with the raw amino-acid sequence, 119 residues long: Protein TusC (119 aa).

The protein belongs to the DsrF/TusC family. As to quaternary structure, heterohexamer, formed by a dimer of trimers. The hexameric TusBCD complex contains 2 copies each of TusB, TusC and TusD. The TusBCD complex interacts with TusE.

The protein resides in the cytoplasm. In terms of biological role, part of a sulfur-relay system required for 2-thiolation of 5-methylaminomethyl-2-thiouridine (mnm(5)s(2)U) at tRNA wobble positions. The chain is Protein TusC from Escherichia coli O157:H7.